Consider the following 354-residue polypeptide: MGCTLSAEDKAAVERSKMIDRNLREDGEKAAKEVKLLLLGAGESGKSTIVKQMKIIHEDGYSEDECKQYKVVVYSNTIQSIIAIIRAMGRLKIDFGEAARADDARQLFVLAGSAEEGVMTSELAGVIKRLWRDGGVQACFGRSREYQLNDSASYYLNDLDRISQTNYIPTQQDVLRTRVKTTGIVETHFTFKELYFKMFDVGGQRSERKKWIHCFEGVTAIIFCVALSDYDLVLAEDEEMNRMHESMKLFDSICNNKWFTDTSIILFLNKKDLFEEKIKRSPLTICYPEYTGSNTYEEAAAYIQCQFEDLNRRKDTKEIYTHFTCATDTKNVQFVFDAVTDVIIKNNLKECGLY.

Gly-2 is lipidated: N-myristoyl glycine. Cys-3 carries S-palmitoyl cysteine lipidation. A G-alpha domain is found at 32 to 354; sequence KEVKLLLLGA…KNNLKECGLY (323 aa). A G1 motif region spans residues 35–48; the sequence is KLLLLGAGESGKST. Residues Gly-42, Glu-43, Ser-44, Gly-45, Lys-46, Ser-47, Thr-48, Asp-150, Ser-151, Leu-175, Arg-176, Thr-177, Arg-178, Val-179, Lys-180, Thr-181, Val-201, Gly-203, Asn-269, Lys-270, Asp-272, Leu-273, Cys-325, Ala-326, and Thr-327 each coordinate GTP. Ser-47 provides a ligand contact to Mg(2+). Residues 173-181 form a G2 motif region; it reads DVLRTRVKT. Thr-181 contacts Mg(2+). The interval 196 to 205 is G3 motif; sequence FKMFDVGGQR. A G4 motif region spans residues 265-272; that stretch reads ILFLNKKD. The interval 324–329 is G5 motif; sequence TCATDT.

This sequence belongs to the G-alpha family. G(i/o/t/z) subfamily. As to quaternary structure, heterotrimeric G proteins are composed of 3 units; alpha, beta and gamma. The alpha subunit contains the guanine nucleotide binding site. GTP binding causes dissociation of the heterotrimer, liberating the individual subunits so that they can interact with downstream effector proteins. Forms a complex with CCDC88A/GIV and EGFR which leads to enhanced EGFR signaling and triggering of cell migration; ligand stimulation is required for recruitment of GNAI3 to the complex. Interacts (inactive GDP-bound form) with CCDC88A/GIV (via GBA motif); the interaction leads to activation of GNAI3. Interacts (inactive GDP-bound form) with CCDC88C/DAPLE (via GBA motif); the interaction leads to activation of GNAI3. Interacts (inactive GDP-bound form) with NUCB1 (via GBA motif) and NUCB2 (via GBA motif); the interaction leads to activation of GNAI3. Interacts (inactive GDP-bound form) with PLCD4 (via GBA motif); the interaction leads to activation of GNAI3. Interacts with INSR; the interaction is probably mediated by CCDC88A/GIV. Interacts with GPSM1. Interacts (GDP-bound form) with GPSM2 (via GoLoco domains). Does not interact with RGS2. Interacts with RGS8 and RGS10; this strongly enhances the intrinsic GTPase activity. Interacts with RGS16; this strongly enhances the intrinsic GTPase activity. Interacts with RGS12. Interacts (via active GTP- or inactive GDP-bound form) with RGS14. Interacts (via active GTP-bound form) with TRPC5 (via ANK repeats) in a homotetrameric ion channel; the interaction is direct and activates the channel activity.

It is found in the cytoplasm. It localises to the cell membrane. The protein resides in the cytoskeleton. Its subcellular location is the microtubule organizing center. The protein localises to the centrosome. Functionally, heterotrimeric guanine nucleotide-binding proteins (G proteins) function as transducers downstream of G protein-coupled receptors (GPCRs) in numerous signaling cascades. The alpha chain contains the guanine nucleotide binding site and alternates between an active, GTP-bound state and an inactive, GDP-bound state. Signaling by an activated GPCR promotes GDP release and GTP binding. The alpha subunit has a low GTPase activity that converts bound GTP to GDP, thereby terminating the signal. Both GDP release and GTP hydrolysis are modulated by numerous regulatory proteins. Signaling is mediated via effector proteins, such as adenylate cyclase. Inhibits adenylate cyclase activity, leading to decreased intracellular cAMP levels. Stimulates the activity of receptor-regulated K(+) channels. The active GTP-bound form prevents the association of RGS14 with centrosomes and is required for the translocation of RGS14 from the cytoplasm to the plasma membrane. May play a role in cell division. The active GTP-bound form activates the calcium permeant TRPC5 ion channels. In Cricetulus griseus (Chinese hamster), this protein is Guanine nucleotide-binding protein G(i) subunit alpha-3 (GNAI3).